A 231-amino-acid polypeptide reads, in one-letter code: NADH-ubiquinone oxidoreductase chain 4 (231 aa).

6 helical membrane-spanning segments follow: residues 1-21, 34-54, 63-85, 89-111, 128-148, and 169-189; these read PIAGSMVLAAILLKLGGYGII, MFLPFIVLALWGAILANLTCL, IAYSSISHMGLVVAAIIIQTPWG, AMALMIAHGFTSSALFCLANTTY, ILPMTTTWWLFVNLMNIAIPP, and TIIMLGLSMLITASYSLHMFL.

It belongs to the complex I subunit 4 family.

The protein localises to the mitochondrion membrane. It carries out the reaction a ubiquinone + NADH + 5 H(+)(in) = a ubiquinol + NAD(+) + 4 H(+)(out). Functionally, core subunit of the mitochondrial membrane respiratory chain NADH dehydrogenase (Complex I) that is believed to belong to the minimal assembly required for catalysis. Complex I functions in the transfer of electrons from NADH to the respiratory chain. The immediate electron acceptor for the enzyme is believed to be ubiquinone. The protein is NADH-ubiquinone oxidoreductase chain 4 (MT-ND4) of Deinagkistrodon acutus (Hundred-pace snake).